Here is a 245-residue protein sequence, read N- to C-terminus: 6-carboxyhexanoate--CoA ligase (245 aa).

It belongs to the BioW family. As to quaternary structure, homodimer. It depends on Mg(2+) as a cofactor.

The catalysed reaction is heptanedioate + ATP + CoA = 6-carboxyhexanoyl-CoA + AMP + diphosphate. It participates in metabolic intermediate metabolism; pimeloyl-CoA biosynthesis; pimeloyl-CoA from pimelate: step 1/1. Catalyzes the transformation of pimelate into pimeloyl-CoA with concomitant hydrolysis of ATP to AMP. This Sulfurihydrogenibium azorense (strain DSM 15241 / OCM 825 / Az-Fu1) protein is 6-carboxyhexanoate--CoA ligase.